The primary structure comprises 732 residues: E3 ubiquitin-protein ligase RNF19B (732 aa).

The interval 1–109 (MGSEKDSESP…PEEDEAAEGG (109 aa)) is disordered. The tract at residues 1–315 (MGSEKDSESP…VCGCEFCWLC (315 aa)) is required for ubiquitin ligase activity and for protection against staurosporin-induced cell death. The span at 54–71 (AEPPPPAAPPPPPPPAPA) shows a compositional bias: pro residues. The span at 72-99 (PVEAQAPPVEALPSEPAAEAEAEAVAAG) shows a compositional bias: low complexity. Positions 100–109 (PEEDEAAEGG) are enriched in acidic residues. The interval 112-334 (EEVECPLCLV…LSPSGCTFWG (223 aa)) is TRIAD supradomain. Residues cysteine 116, cysteine 119, cysteine 139, cysteine 142, cysteine 203, cysteine 208, cysteine 225, cysteine 230, cysteine 235, cysteine 238, histidine 243, cysteine 248, cysteine 284, and cysteine 287 each coordinate Zn(2+). The RING-type 1 zinc finger occupies 116-165 (CPLCLVRLPPERAPRLLSCPHRSCRDCLRHYLRLEISESRVPISCPECSE). Residues 183–248 (HKYEEFMLRR…KQIWHPNQTC (66 aa)) form an IBR-type zinc finger. Residues 284–315 (CPRCSAYIIKMNDGSCNHMTCAVCGCEFCWLC) form an RING-type 2; atypical zinc finger. The active site involves cysteine 299. Residues cysteine 304, cysteine 307, cysteine 312, cysteine 315, histidine 323, and cysteine 330 each coordinate Zn(2+). 2 helical membrane-spanning segments follow: residues 351 to 371 (LIGA…AMVI) and 412 to 432 (VIAA…VYGV). Disordered stretches follow at residues 598–644 (QLVS…QSCE) and 660–732 (QPES…YEVE). A compositionally biased stretch (acidic residues) spans 674 to 683 (QSDDVPDITS).

It belongs to the RBR family. RNF19 subfamily. Interacts with UBE2L3, UBE2L6 and UCKL1. In terms of tissue distribution, expressed specifically in natural killer cells, activated macrophages and cytotoxic T-cells. Present in macrophages (at protein level). Ubiquitously expressed with high expression in testis.

It localises to the cytoplasmic granule membrane. The protein localises to the endoplasmic reticulum membrane. The catalysed reaction is [E2 ubiquitin-conjugating enzyme]-S-ubiquitinyl-L-cysteine + [acceptor protein]-L-lysine = [E2 ubiquitin-conjugating enzyme]-L-cysteine + [acceptor protein]-N(6)-ubiquitinyl-L-lysine.. It functions in the pathway protein modification; protein ubiquitination. Its function is as follows. E3 ubiquitin-protein ligase which accepts ubiquitin from E2 ubiquitin-conjugating enzymes UBE2L3 and UBE2L6 in the form of a thioester and then directly transfers the ubiquitin to targeted substrates, such as UCKL1. Involved in the cytolytic activity of natural killer cells and cytotoxic T-cells. Protects against staurosporin-induced cell death. This is E3 ubiquitin-protein ligase RNF19B (Rnf19b) from Mus musculus (Mouse).